The following is a 310-amino-acid chain: tRNA-5-methyluridine(54) 2-sulfurtransferase (310 aa).

Residues cysteine 3, cysteine 6, cysteine 22, and histidine 25 each coordinate Zn(2+). Residues alanine 53 and isoleucine 79 each coordinate ATP. Residues cysteine 128 and cysteine 131 each coordinate [4Fe-4S] cluster. Cysteines 128 and 220 form a disulfide. 2 residues coordinate ATP: lysine 135 and glycine 154. Cysteine 220 contributes to the [4Fe-4S] cluster binding site. Zn(2+)-binding residues include cysteine 272, cysteine 275, cysteine 284, and cysteine 287.

The protein belongs to the TtcA family. TtuA subfamily. As to quaternary structure, homodimer. Requires [4Fe-4S] cluster as cofactor. The cofactor is Mg(2+).

It carries out the reaction 5-methyluridine(54) in tRNA + hydrogen sulfide + ATP = 5-methyl-2-thiouridine(54) in tRNA + AMP + diphosphate. It participates in tRNA modification. Its function is as follows. Catalyzes the ATP-dependent 2-thiolation of 5-methyluridine residue at position 54 in the T loop of tRNAs, leading to 5-methyl-2-thiouridine (m(5)s(2)U or s(2)T). This modification allows thermal stabilization of tRNAs in thermophilic microorganisms, and is required for cell growth at high temperatures. Can use free sulfide as sulfur source in vitro, which may be also the sulfur source in vivo. The chain is tRNA-5-methyluridine(54) 2-sulfurtransferase from Pyrococcus horikoshii (strain ATCC 700860 / DSM 12428 / JCM 9974 / NBRC 100139 / OT-3).